The chain runs to 420 residues: MSSRYLFTSESVTEGHPDKICDQISDTIIDAILAQDPQSRVAAEVVVNTGLVLITGEITTKAQVNYIELARKKIADIGYVHAENGFSADSCSVLVALDEQSADIAQGVDKAQETRELLSEEELDAVGAGDQGLMFGFACNETPELMPLPISLAHRVCRQLTAVRKTGQLPYLRPDGKSQVTITYEDGRPVGIDTILISTQHTAKIGEITELSDIQAKIKEDLWKYVVEPIFKDAEIKPNSQTRFLVNPTGKFVIGGPQGDCGLTGRKIIIDTYGGYSRHGGGAFSGKDPTKVDRSAAYACRYIAKNIVAADLAEKCEVQISYAIGVAKPVSMMIETFGTSKVDEDKLLEVVKENFELRPAGIIQNFNLRNLPGERGGRFYQDVAAYGHLGRTDLDLPWEQTDKVELLKQAFSPQLLATAS.

ATP is bound at residue His-16. Mg(2+) is bound at residue Asp-18. K(+) is bound at residue Glu-44. Glu-57 and Gln-100 together coordinate L-methionine. Residues 100–110 form a flexible loop region; the sequence is QSADIAQGVDK. ATP is bound by residues 175-177, 251-252, Asp-260, 266-267, Ala-283, and Lys-287; these read DGK, KF, and RK. Asp-260 contacts L-methionine. Lys-291 contributes to the L-methionine binding site.

The protein belongs to the AdoMet synthase family. Homotetramer; dimer of dimers. It depends on Mg(2+) as a cofactor. The cofactor is K(+).

It localises to the cytoplasm. It catalyses the reaction L-methionine + ATP + H2O = S-adenosyl-L-methionine + phosphate + diphosphate. It participates in amino-acid biosynthesis; S-adenosyl-L-methionine biosynthesis; S-adenosyl-L-methionine from L-methionine: step 1/1. Functionally, catalyzes the formation of S-adenosylmethionine (AdoMet) from methionine and ATP. The overall synthetic reaction is composed of two sequential steps, AdoMet formation and the subsequent tripolyphosphate hydrolysis which occurs prior to release of AdoMet from the enzyme. This Trichodesmium erythraeum (strain IMS101) protein is S-adenosylmethionine synthase.